A 310-amino-acid chain; its full sequence is Glycerol-3-phosphate dehydrogenase [NAD(P)+] (310 aa).

Positions 14, 34, 35, and 82 each coordinate NADPH. Residues K82 and G110 each contribute to the sn-glycerol 3-phosphate site. S114 is an NADPH binding site. Residues K165, D218, S228, R229, and N230 each contribute to the sn-glycerol 3-phosphate site. Residue K165 is the Proton acceptor of the active site. Position 229 (R229) interacts with NADPH. E255 is a binding site for NADPH.

It belongs to the NAD-dependent glycerol-3-phosphate dehydrogenase family.

The protein resides in the cytoplasm. The catalysed reaction is sn-glycerol 3-phosphate + NAD(+) = dihydroxyacetone phosphate + NADH + H(+). The enzyme catalyses sn-glycerol 3-phosphate + NADP(+) = dihydroxyacetone phosphate + NADPH + H(+). The protein operates within membrane lipid metabolism; glycerophospholipid metabolism. Functionally, catalyzes the reduction of the glycolytic intermediate dihydroxyacetone phosphate (DHAP) to sn-glycerol 3-phosphate (G3P), the key precursor for phospholipid synthesis. This is Glycerol-3-phosphate dehydrogenase [NAD(P)+] from Acaryochloris marina (strain MBIC 11017).